Reading from the N-terminus, the 91-residue chain is Early E3B 10.4 kDa protein (91 aa).

The N-terminal stretch at 1-21 (MVTVLLIFLCLPVIFSSSTFA) is a signal peptide. Residues 22 to 33 (AVSDLDPECLAP) lie on the Lumenal side of the membrane. The helical transmembrane segment at 34–56 (FAVYLIFTFVTATCVCSIITLLI) threads the bilayer. Topologically, residues 57 to 91 (TSLQFFDYYYVRIVYRRHHPRYQNPQIAALLQLQP) are cytoplasmic.

Belongs to the adenoviridae E3B family.

It is found in the host endoplasmic reticulum membrane. Down-regulates the EGF receptor. This chain is Early E3B 10.4 kDa protein, found in Homo sapiens (Human).